We begin with the raw amino-acid sequence, 417 residues long: Serine hydroxymethyltransferase (417 aa).

(6S)-5,6,7,8-tetrahydrofolate contacts are provided by residues Leu121 and Gly125 to Leu127. An N6-(pyridoxal phosphate)lysine modification is found at Lys229. Ser355–Phe357 lines the (6S)-5,6,7,8-tetrahydrofolate pocket.

Belongs to the SHMT family. In terms of assembly, homodimer. The cofactor is pyridoxal 5'-phosphate.

The protein resides in the cytoplasm. The enzyme catalyses (6R)-5,10-methylene-5,6,7,8-tetrahydrofolate + glycine + H2O = (6S)-5,6,7,8-tetrahydrofolate + L-serine. The protein operates within one-carbon metabolism; tetrahydrofolate interconversion. It functions in the pathway amino-acid biosynthesis; glycine biosynthesis; glycine from L-serine: step 1/1. Catalyzes the reversible interconversion of serine and glycine with tetrahydrofolate (THF) serving as the one-carbon carrier. This reaction serves as the major source of one-carbon groups required for the biosynthesis of purines, thymidylate, methionine, and other important biomolecules. Also exhibits THF-independent aldolase activity toward beta-hydroxyamino acids, producing glycine and aldehydes, via a retro-aldol mechanism. This Salmonella paratyphi C (strain RKS4594) protein is Serine hydroxymethyltransferase.